The following is a 360-amino-acid chain: Molybdenum import ATP-binding protein ModC (360 aa).

Residues V5–D234 enclose the ABC transporter domain. ATP is bound at residue G32–T39. Residues H295 to A360 form the Mop domain.

The protein belongs to the ABC transporter superfamily. Molybdate importer (TC 3.A.1.8) family. In terms of assembly, the complex is composed of two ATP-binding proteins (ModC), two transmembrane proteins (ModB) and a solute-binding protein (ModA).

It is found in the cell inner membrane. The catalysed reaction is molybdate(out) + ATP + H2O = molybdate(in) + ADP + phosphate + H(+). Part of the ABC transporter complex ModABC involved in molybdenum import. Responsible for energy coupling to the transport system. In Pseudomonas fluorescens (strain ATCC BAA-477 / NRRL B-23932 / Pf-5), this protein is Molybdenum import ATP-binding protein ModC.